Consider the following 99-residue polypeptide: Acylphosphatase (99 aa).

Residues Ile5 to Pro97 form the Acylphosphatase-like domain. Active-site residues include Arg20 and Asn38.

The protein belongs to the acylphosphatase family.

It carries out the reaction an acyl phosphate + H2O = a carboxylate + phosphate + H(+). The polypeptide is Acylphosphatase (acyP) (Bradyrhizobium diazoefficiens (strain JCM 10833 / BCRC 13528 / IAM 13628 / NBRC 14792 / USDA 110)).